A 305-amino-acid polypeptide reads, in one-letter code: Methionyl-tRNA formyltransferase (305 aa).

Residue 111 to 114 (SLLP) coordinates (6S)-5,6,7,8-tetrahydrofolate.

It belongs to the Fmt family.

It catalyses the reaction L-methionyl-tRNA(fMet) + (6R)-10-formyltetrahydrofolate = N-formyl-L-methionyl-tRNA(fMet) + (6S)-5,6,7,8-tetrahydrofolate + H(+). Its function is as follows. Attaches a formyl group to the free amino group of methionyl-tRNA(fMet). The formyl group appears to play a dual role in the initiator identity of N-formylmethionyl-tRNA by promoting its recognition by IF2 and preventing the misappropriation of this tRNA by the elongation apparatus. This is Methionyl-tRNA formyltransferase from Campylobacter jejuni subsp. jejuni serotype O:23/36 (strain 81-176).